Consider the following 260-residue polypeptide: MSEQPAASRIQVEALGDGFKARAEQWASLLGLPLQLADADFSLQVGEHGLQLQQLGPDAPGPVRVDFVEGGAAHRRLYGGGSGQMIAKAVGIAQGVRPRVLDATAGLGKDAFVLASLGCEMSLIERQPLIGALLEDGLARGADDFEVAPIVARMQLLKGNSIDVMRNWEGEPPQVIYLDPMFPHREKTALVKKEMRLFRPLVGDDPDAPALLAAALALASHRVVVKRPRKAPCIDGPKPSHALDGKSSRYDIYPKKALKP.

S-adenosyl-L-methionine contacts are provided by residues 125–126 and Asp179; that span reads ER. A disordered region spans residues 234–260; the sequence is IDGPKPSHALDGKSSRYDIYPKKALKP. Positions 241–254 are enriched in basic and acidic residues; that stretch reads HALDGKSSRYDIYP.

It belongs to the methyltransferase superfamily. RsmJ family.

It localises to the cytoplasm. The catalysed reaction is guanosine(1516) in 16S rRNA + S-adenosyl-L-methionine = N(2)-methylguanosine(1516) in 16S rRNA + S-adenosyl-L-homocysteine + H(+). Functionally, specifically methylates the guanosine in position 1516 of 16S rRNA. This Pseudomonas fluorescens (strain SBW25) protein is Ribosomal RNA small subunit methyltransferase J.